Consider the following 617-residue polypeptide: KIF-binding protein (617 aa).

A disordered region spans residues A48 to G83. Position 174 is a phosphoserine (S174).

This sequence belongs to the KIF-binding protein family. As to quaternary structure, interacts with KIF1B; positively regulates KIF1B microtubule motor activity. Interacts with STMN2.

The protein resides in the cytoplasm. It is found in the cytoskeleton. Functionally, activator of KIF1B plus-end-directed microtubule motor activity. Required for organization of axonal microtubules, and axonal outgrowth and maintenance during peripheral and central nervous system development. The sequence is that of KIF-binding protein (Kifbp) from Rattus norvegicus (Rat).